A 345-amino-acid chain; its full sequence is MGILGASGYGGAELLRLLKAHPEVELVGFSSRKYEGRPLEAAWPQLWDGRLFAAQEEVLERAEVVFLALPNGLSMEIAPEALKAGKRVVDLSGDFRLPPEVYEAWYRIPHKSPDLYREAVYGLPELHREELKGARLVANPGCYVTAATLALAPLAAEGVLKGAFVVGLSGVSGAGREAEGTAFAEVNENLKPYKAGGTHRHIPEMERNLGRILAQGRRVRTHGEARAVRLSFTPHLVPMTRGILVTAEAEVEGAWSQESLEALYRDFYAGEPFVRVLKGLPETKATLGSNRVDVRPLYEERTGRVLVFAALDNLVKGMAGQAVQNLNLMLGLPEETALPKEGLWP.

The active site involves Cys142.

The protein belongs to the NAGSA dehydrogenase family. Type 1 subfamily.

It is found in the cytoplasm. It catalyses the reaction N-acetyl-L-glutamate 5-semialdehyde + phosphate + NADP(+) = N-acetyl-L-glutamyl 5-phosphate + NADPH + H(+). It functions in the pathway amino-acid biosynthesis; L-arginine biosynthesis; N(2)-acetyl-L-ornithine from L-glutamate: step 3/4. Its function is as follows. Catalyzes the NADPH-dependent reduction of N-acetyl-5-glutamyl phosphate to yield N-acetyl-L-glutamate 5-semialdehyde. The protein is N-acetyl-gamma-glutamyl-phosphate reductase of Thermus thermophilus (strain ATCC BAA-163 / DSM 7039 / HB27).